Here is a 648-residue protein sequence, read N- to C-terminus: Pumilio homolog 3 (648 aa).

The disordered stretch occupies residues 1–124; it reads MEVKGKKQFT…KKKKELKQSR (124 aa). Residues 17-27 are compositionally biased toward basic and acidic residues; the sequence is AQEKNRFHKNS. Lysine 33 is modified (N6-acetyllysine). Residues 60-69 show a composition bias toward basic residues; that stretch reads LGKKGVKQFK. A compositionally biased stretch (basic and acidic residues) spans 94 to 124; that stretch reads FQPDGRSDESAAKKPKWDDFKKKKKELKQSR. Residues 106–118 carry the Nuclear localization signal motif; the sequence is KKPKWDDFKKKKK. The region spanning 143-510 is the PUM-HD domain; it reads EILRRKDCDK…VVLDKSACVL (368 aa). Pumilio repeat units follow at residues 177–212, 213–248, 249–277, 289–325, 326–361, 362–397, 398–435, 436–504, 505–551, 552–596, and 597–636; these read HDSTRVIQCYIQYGNEEQRKQAFEELRDDLVELSKA, KYSRNIVKKFLMYGSKPQIAEIIRSFKGHVRKMLRH, AEASAIVEYAYNDKAILEQRNMLTEELYG, RTLDKVLEVQPEKLELIMDEMKQILTPMAQKEAVIKH, SLVHKVFLDFFTYAPPKLRSEMIEAIREAVVYLAHT, HDGARVAMHCLWHGTPKDRKVIVKTMKTYVEKVANG, QYSHLVLLAAFDCIDDTKLVKQIIISEIISSLPSIVND, KYGR…VVLD, KSAC…IAEH, PAGH…WASV, and NRGAIILSSLLQSCDLEVANKVKAALKSLIPTLEKTKSTS. The HA-8 stretch occupies residues 289–297; that stretch reads RTLDKVLEV.

Interacts with PARP1 (via catalytic domain). Widely expressed.

The protein localises to the nucleus. It is found in the nucleolus. It localises to the nucleoplasm. Its subcellular location is the chromosome. Inhibits the poly(ADP-ribosyl)ation activity of PARP1 and the degradation of PARP1 by CASP3 following genotoxic stress. Binds to double-stranded RNA or DNA without sequence specificity. Involved in development of the eye and of primordial germ cells. The protein is Pumilio homolog 3 of Homo sapiens (Human).